A 233-amino-acid chain; its full sequence is 2-amino-5-formylamino-6-ribosylaminopyrimidin-4(3H)-one 5'-monophosphate deformylase (233 aa).

Residues Glu33, His35, Asp44, and His114 each coordinate Fe cation.

It belongs to the creatininase superfamily. FAPy deformylase family. Homodimer. Requires Fe(2+) as cofactor. The cofactor is Zn(2+).

The catalysed reaction is 2-amino-5-formylamino-6-(5-phospho-D-ribosylamino)pyrimidin-4(3H)-one + H2O = 2,5-diamino-6-(1-D-ribosylamino)pyrimidin-4(3H)-one 5'-phosphate + formate + H(+). The protein operates within cofactor biosynthesis; coenzyme F420 biosynthesis. Its pathway is cofactor biosynthesis; riboflavin biosynthesis. Its function is as follows. Catalyzes the hydrolysis of the formamide of 2-amino-5-formylamino-6-ribosylamino-4(3H)-pyrimidinone 5'-monophosphate (FAPy) to form 2,5-diamino-6-ribosylamino-4(3H)-pyrimidinone 5'-phosphate (APy). The polypeptide is 2-amino-5-formylamino-6-ribosylaminopyrimidin-4(3H)-one 5'-monophosphate deformylase (Methanosphaera stadtmanae (strain ATCC 43021 / DSM 3091 / JCM 11832 / MCB-3)).